A 402-amino-acid polypeptide reads, in one-letter code: Plasminogen activator inhibitor 1 (402 aa).

Positions 1 to 23 are cleaved as a signal peptide; the sequence is MRMSLVFACLAMGLALTFAEGSA. 3 N-linked (GlcNAc...) asparagine glycosylation sites follow: Asn-232, Asn-288, and Asn-352.

It belongs to the serpin family. Forms a heterodimer with TMPRSS7. Interacts with VTN. Binds LRP1B; binding is followed by internalization and degradation. Interacts with PPP1CB. In complex with PLAU/uPA, interacts with PLAUR/uPAR. Interacts with SORL1 and LRP1, either alone or in complex with PLAU; these interactions are abolished in the presence of LRPAP1/RAP. The ternary complex composed of PLAUR-PLAU-PAI1 also interacts with SORL1. Interacts with PLAT/tPA. Also interacts with SORL1, when complexed to PLAT/tPA.

The protein localises to the secreted. Its function is as follows. Serine protease inhibitor. Inhibits TMPRSS7. Is a primary inhibitor of tissue-type plasminogen activator (PLAT) and urokinase-type plasminogen activator (PLAU). As PLAT inhibitor, it is required for fibrinolysis down-regulation and is responsible for the controlled degradation of blood clots. As PLAU inhibitor, it is involved in the regulation of cell adhesion and spreading. Acts as a regulator of cell migration, independently of its role as protease inhibitor. It is required for stimulation of keratinocyte migration during cutaneous injury repair. It is involved in cellular and replicative senescence. Plays a role in alveolar type 2 cells senescence in the lung. Is involved in the regulation of cementogenic differentiation of periodontal ligament stem cells, and regulates odontoblast differentiation and dentin formation during odontogenesis. In Sus scrofa (Pig), this protein is Plasminogen activator inhibitor 1 (SERPINE1).